The following is a 467-amino-acid chain: Sexual differentiation process putative subtilase-type proteinase isp6 (467 aa).

The region spanning 86-176 is the Inhibitor I9 domain; the sequence is YIIVLQPDLS…AVERDQVVSI (91 aa). The Peptidase S8 domain maps to 186 to 467; sequence PWGLARISHK…NLLAFNGAQE (282 aa). Active-site charge relay system residues include Asp-221, His-253, and Ser-409.

Belongs to the peptidase S8 family.

This Schizosaccharomyces pombe (strain 972 / ATCC 24843) (Fission yeast) protein is Sexual differentiation process putative subtilase-type proteinase isp6 (isp6).